Reading from the N-terminus, the 152-residue chain is uncharacterized protein (152 aa).

This sequence belongs to the transposase 8 family.

This is an uncharacterized protein from Sinorhizobium fredii (strain NBRC 101917 / NGR234).